The primary structure comprises 206 residues: MSRRQGRETALQTLFMADVGRMEPAYALQYASEEFGISEAAAAFARELVEGAVANRETIDGNIRRLAKEWNLERMPHVDRNLLRVAIFEMLFREDIPLNAAINEAIELAKIYANEESAKFVNGILGQLARELREARGEKTSAQEGAPAAVTNRVTTPAPESTPVPDPDATPATTPVTTTVISETAANRETRSMAEEETQPPGVNEV.

Residues 135–206 (ARGEKTSAQE…ETQPPGVNEV (72 aa)) are disordered. Positions 169 to 180 (ATPATTPVTTTV) are enriched in low complexity.

Belongs to the NusB family.

Functionally, involved in transcription antitermination. Required for transcription of ribosomal RNA (rRNA) genes. Binds specifically to the boxA antiterminator sequence of the ribosomal RNA (rrn) operons. This is Transcription antitermination protein NusB from Heliobacterium modesticaldum (strain ATCC 51547 / Ice1).